A 153-amino-acid polypeptide reads, in one-letter code: Transcription antitermination protein NusB (153 aa).

Belongs to the NusB family.

Functionally, involved in transcription antitermination. Required for transcription of ribosomal RNA (rRNA) genes. Binds specifically to the boxA antiterminator sequence of the ribosomal RNA (rrn) operons. The protein is Transcription antitermination protein NusB of Symbiobacterium thermophilum (strain DSM 24528 / JCM 14929 / IAM 14863 / T).